Consider the following 8903-residue polypeptide: Nonribosomal peptide synthetase vlms (8903 aa).

The region spanning 11-84 (GSCRTTLGKV…ELADSIDEQN (74 aa)) is the Carrier 1 domain. The segment at 13–81 (CRTTLGKVAA…TLAELADSID (69 aa)) is thiolation (T) domain 1. An O-(pantetheine 4'-phosphoryl)serine modification is found at S45. Adenylation (A) domain regions lie at residues 59-736 (GIWV…SHLP) and 989-1386 (MAAQ…IKIR). A condensation (C) domain 1 region spans residues 572–953 (VPHQLDTEKL…FLLDGVNMSI (382 aa)). In terms of domain architecture, Carrier 2 spans 1524–1600 (SSMSTVEQEL…QLALAAESQA (77 aa)). A thiolation (T) domain 2 region spans residues 1529–1597 (VEQELRQIWS…TIPQLALAAE (69 aa)). An O-(pantetheine 4'-phosphoryl)serine modification is found at S1561. The interval 1613–2050 (FPLSPIQKMY…TVKELAAVSA (438 aa)) is epimerase (E) domain 1. The interval 2091–2523 (DILPCSPIQQ…LLSVSEENKL (433 aa)) is condensation (C) domain 2. The interval 2546–2943 (MSSHADATAI…GRQDSQVKIR (398 aa)) is adenylation (A) domain 2. Residues 3084–3160 (LFTTAIERQL…ELALQAKMVD (77 aa)) form the Carrier 3 domain. The thiolation (T) domain 3 stretch occupies residues 3089 to 3157 (IERQLRQVWS…TIPELALQAK (69 aa)). S3121 bears the O-(pantetheine 4'-phosphoryl)serine mark. The interval 3174-3614 (FALSPIQQMY…AIKSLVEELM (441 aa)) is epimerase (E) domain 2. The tract at residues 3655–4093 (EDILPCSPMQ…LMSTKDIQQL (439 aa)) is condensation (C) domain 3. Residues 4114–4512 (ERLNTQPESM…GRIDTQIKIR (399 aa)) are adenylation (A) domain 3. Residues 4649–4725 (APRTTMEKKL…DLAEATELKC (77 aa)) form the Carrier 4 domain. Residues 4654–4722 (MEKKLRDLFA…ILADLAEATE (69 aa)) are thiolation (T) domain 4. Residue S4686 is modified to O-(pantetheine 4'-phosphoryl)serine. Positions 4775 to 5191 (EDVYPCSPLQ…AQLQMLSEED (417 aa)) are condensation (C) domain 4. Residues 5216 to 5614 (ETMTSQPDAP…GRRDTQVKIR (399 aa)) are adenylation (A) domain 4. Residues 5753–5829 (APTTAMEKRL…DLAQELEQRH (77 aa)) form the Carrier 5 domain. The thiolation (T) domain 5 stretch occupies residues 5758–5826 (MEKRLQNLFC…RLGDLAQELE (69 aa)). S5790 bears the O-(pantetheine 4'-phosphoryl)serine mark. A region of interest (condensation (C) domain 5) is located at residue E5875. Residues 6311–6702 (EEQMSLRPSE…GRMDGQIKIR (392 aa)) are adenylation (A) domain 5. The region spanning 6836-6912 (SSATNTERQL…ELAATLEVMD (77 aa)) is the Carrier 6 domain. The interval 6841-6909 (TERQLRQIWS…TIPELAATLE (69 aa)) is thiolation (T) domain 6. S6873 carries the O-(pantetheine 4'-phosphoryl)serine modification. The interval 6923-7349 (GFFELSPIQR…YGRTIKTLVE (427 aa)) is epimerase (E) domain 3. The segment at 7391 to 7823 (EDILPCSPIQ…LVLTNDEAQI (433 aa)) is condensation (C) domain 6. The interval 7844-8240 (EQMARKPEAQ…LDRIGTQVKI (397 aa)) is adenylation (A) domain 6. The 77-residue stretch at 8368–8444 (APISATEAVF…AMAACVSDVS (77 aa)) folds into the Carrier 7 domain. The interval 8369-8441 (PISATEAVFC…VLHAMAACVS (73 aa)) is thiolation (T) domain 7. S8405 is modified (O-(pantetheine 4'-phosphoryl)serine). The interval 8482–8897 (DVLPTTEFQT…MENPRSTVGH (416 aa)) is condensation (C) domain 7.

The protein belongs to the NRP synthetase family.

The protein operates within secondary metabolite biosynthesis. Its function is as follows. Nonribosomal peptide synthetase; part of the gene cluster that mediates the biosynthesis of verlamelin, a lipopeptide that exhibits antifungal activity against plant pathogenic fungi. Verlamelin is a cyclic hexadepsipeptide and is bridged by ester bonding between a 5-hydroxytetradecanoic acid moiety and a carboxyl group on the terminal Val of amide-bonded tetradecanoyl-hexapeptide D-allo-Thr-D-Ala-L-Pro-L-Gln-D-Tyr-L-Val. VlmA and vlmB are altogether regarded as essential components in the biosynthesis of 5-hydroxytetradecanoic acid. VlmA catalyzes the hydroxylation at position C5 of tetradecanoic acid produced in primary metabolism, while the precise function of vlmB still remains to be solved. To be loaded onto the waiting NRPS, 5-hydroxytetradecanoic acid is activated in the form of acyladenylate by the AMP-dependent ligase vlmC. VlmS seems to accept the fatty-acyl intermediate onto the initial module to further elongate amino acid residues by the downstream modules. In addition, in the last module at its C-terminus, vlmS contains a surplus condensation (C) domain that may be involved in cyclization, the last step to form verlamelin. This Lecanicillium sp protein is Nonribosomal peptide synthetase vlms.